Reading from the N-terminus, the 65-residue chain is Large ribosomal subunit protein uL29 (65 aa).

The tract at residues 30–49 is disordered; that stretch reads ERSSVAMGGAPSSPGKMRSI.

Belongs to the universal ribosomal protein uL29 family.

The polypeptide is Large ribosomal subunit protein uL29 (Picrophilus torridus (strain ATCC 700027 / DSM 9790 / JCM 10055 / NBRC 100828 / KAW 2/3)).